The sequence spans 474 residues: UDP-N-acetylmuramate--L-alanine ligase (474 aa).

Residue 123 to 129 coordinates ATP; that stretch reads GTHGKTT.

It belongs to the MurCDEF family.

The protein resides in the cytoplasm. It carries out the reaction UDP-N-acetyl-alpha-D-muramate + L-alanine + ATP = UDP-N-acetyl-alpha-D-muramoyl-L-alanine + ADP + phosphate + H(+). The protein operates within cell wall biogenesis; peptidoglycan biosynthesis. Functionally, cell wall formation. This Alcanivorax borkumensis (strain ATCC 700651 / DSM 11573 / NCIMB 13689 / SK2) protein is UDP-N-acetylmuramate--L-alanine ligase.